The sequence spans 734 residues: Ribosomal biogenesis protein LAS1L (734 aa).

The disordered stretch occupies residues 204–255 (EGIEEEDQEEDKNIVVDDITEQKPEPQDDGKSTESDVKADGDSKGSEEVDSH). A compositionally biased stretch (basic and acidic residues) spans 214-255 (DKNIVVDDITEQKPEPQDDGKSTESDVKADGDSKGSEEVDSH). Residues Lys-215 and Lys-226 each participate in a glycyl lysine isopeptide (Lys-Gly) (interchain with G-Cter in SUMO2) cross-link. A phosphoserine mark is found at Ser-441, Ser-523, and Ser-560. Positions 547 to 561 (GSEAKAQQQEEQGSV) are enriched in polar residues. A disordered region spans residues 547–619 (GSEAKAQQQE…PFSTGQESPT (73 aa)). Residues 563–575 (DVKEEEKEEKEVL) are compositionally biased toward basic and acidic residues. Residues 578–605 (QVEEEEENDDQEEEEEDEDDEDDEEEDR) are compositionally biased toward acidic residues. Ser-617 bears the Phosphoserine mark. An interaction with NOL9 region spans residues 636–655 (SAWQVSSEDVRWDTFPLGRM).

It belongs to the LAS1 family. Component of some MLL1/MLL complex, at least composed of the core components KMT2A/MLL1, ASH2L, HCFC1/HCF1, WDR5 and RBBP5, as well as the facultative components BACC1, CHD8, E2F6, HSP70, INO80C, KANSL1, LAS1L, MAX, MCRS1, MGA, KAT8/MOF, PELP1, PHF20, PRP31, RING2, RUVB1/TIP49A, RUVB2/TIP49B, SENP3, TAF1, TAF4, TAF6, TAF7, TAF9 and TEX10. Component of the 5FMC complex, at least composed of PELP1, LAS1L, TEX10, WDR18 and SENP3; the complex interacts with methylated CHTOP and ZNF148. Interacts with NOL9 to form an ITS2 pre-rRNA endonuclease-kinase complex.

Its subcellular location is the nucleus. The protein localises to the nucleolus. The protein resides in the nucleoplasm. It localises to the cytoplasm. Required for the synthesis of the 60S ribosomal subunit and maturation of the 28S rRNA. Functions as a component of the Five Friends of Methylated CHTOP (5FMC) complex; the 5FMC complex is recruited to ZNF148 by methylated CHTOP, leading to desumoylation of ZNF148 and subsequent transactivation of ZNF148 target genes. Required for the efficient pre-rRNA processing at both ends of internal transcribed spacer 2 (ITS2). The sequence is that of Ribosomal biogenesis protein LAS1L (LAS1L) from Homo sapiens (Human).